A 400-amino-acid polypeptide reads, in one-letter code: Acetate kinase (400 aa).

Asn-7 is a Mg(2+) binding site. Residue Lys-14 participates in ATP binding. Position 91 (Arg-91) interacts with substrate. The Proton donor/acceptor role is filled by Asp-148. Residues 208–212 (HLGNG), 284–286 (DMR), and 332–336 (GVGEN) each bind ATP. Glu-384 serves as a coordination point for Mg(2+).

Belongs to the acetokinase family. Homodimer. It depends on Mg(2+) as a cofactor. Requires Mn(2+) as cofactor.

The protein localises to the cytoplasm. It catalyses the reaction acetate + ATP = acetyl phosphate + ADP. Its pathway is metabolic intermediate biosynthesis; acetyl-CoA biosynthesis; acetyl-CoA from acetate: step 1/2. Catalyzes the formation of acetyl phosphate from acetate and ATP. Can also catalyze the reverse reaction. This Coprothermobacter proteolyticus (strain ATCC 35245 / DSM 5265 / OCM 4 / BT) protein is Acetate kinase.